Reading from the N-terminus, the 139-residue chain is uncharacterized protein (139 aa).

Residues 1–11 (MALSMSLSSDI) are compositionally biased toward polar residues. 2 disordered regions span residues 1–80 (MALS…AAAA) and 100–139 (ASSP…LARS). Positions 63–80 (GAGSASAGGSRLAAAAAA) are enriched in low complexity.

This is an uncharacterized protein from Homo sapiens (Human).